The primary structure comprises 225 residues: uncharacterized protein (225 aa).

The next 4 helical transmembrane spans lie at 40–60, 63–83, 151–171, and 176–196; these read LISL…LSIV, LAFF…PFSF, LSET…LTIL, and IFSL…IVSL.

The protein localises to the membrane. This is an uncharacterized protein from Saccharomyces cerevisiae (strain ATCC 204508 / S288c) (Baker's yeast).